Reading from the N-terminus, the 105-residue chain is Urease subunit beta (105 aa).

The protein belongs to the urease beta subunit family. As to quaternary structure, heterotrimer of UreA (gamma), UreB (beta) and UreC (alpha) subunits. Three heterotrimers associate to form the active enzyme.

Its subcellular location is the cytoplasm. The enzyme catalyses urea + 2 H2O + H(+) = hydrogencarbonate + 2 NH4(+). The protein operates within nitrogen metabolism; urea degradation; CO(2) and NH(3) from urea (urease route): step 1/1. The sequence is that of Urease subunit beta from Prochlorococcus marinus (strain MIT 9313).